The primary structure comprises 720 residues: Engulfment and cell motility protein 3 (720 aa).

Residues 307-479 form the ELMO domain; that stretch reads EQREQLQALR…VVREQLARTL (173 aa). Residues 541-663 enclose the PH domain; that stretch reads LRLCEGMLFR…WTDGLSALLG (123 aa).

Probably interacts directly with the SH3-domain of DOCK1 via its SH3-binding site. Part of a complex with DOCK1 and RAC1. Interacts with ADGRB3.

It localises to the cytoplasm. Its function is as follows. Involved in cytoskeletal rearrangements required for phagocytosis of apoptotic cells and cell motility. Acts in association with DOCK1 and CRK. Was initially proposed to be required in complex with DOCK1 to activate Rac Rho small GTPases. May enhance the guanine nucleotide exchange factor (GEF) activity of DOCK1. This is Engulfment and cell motility protein 3 (Elmo3) from Rattus norvegicus (Rat).